The following is a 406-amino-acid chain: uncharacterized protein (406 aa).

It is found in the plastid. Its subcellular location is the chloroplast. This is an uncharacterized protein from Euglena gracilis.